An 861-amino-acid polypeptide reads, in one-letter code: DNA mismatch repair protein MutS (861 aa).

618–625 (GPNMGGKS) is a binding site for ATP.

It belongs to the DNA mismatch repair MutS family.

Functionally, this protein is involved in the repair of mismatches in DNA. It is possible that it carries out the mismatch recognition step. This protein has a weak ATPase activity. The chain is DNA mismatch repair protein MutS from Shewanella sp. (strain MR-4).